Reading from the N-terminus, the 285-residue chain is NADPH-dependent 7-cyano-7-deazaguanine reductase (285 aa).

A substrate-binding site is contributed by 80–82 (VES). 82–83 (SK) provides a ligand contact to NADPH. The active-site Thioimide intermediate is the C191. Residue D198 is the Proton donor of the active site. 231 to 232 (HE) is a binding site for substrate. 260-261 (RG) provides a ligand contact to NADPH.

This sequence belongs to the GTP cyclohydrolase I family. QueF type 2 subfamily. Homodimer.

It is found in the cytoplasm. The enzyme catalyses 7-aminomethyl-7-carbaguanine + 2 NADP(+) = 7-cyano-7-deazaguanine + 2 NADPH + 3 H(+). It participates in tRNA modification; tRNA-queuosine biosynthesis. In terms of biological role, catalyzes the NADPH-dependent reduction of 7-cyano-7-deazaguanine (preQ0) to 7-aminomethyl-7-deazaguanine (preQ1). This Psychrobacter cryohalolentis (strain ATCC BAA-1226 / DSM 17306 / VKM B-2378 / K5) protein is NADPH-dependent 7-cyano-7-deazaguanine reductase.